A 247-amino-acid polypeptide reads, in one-letter code: MSKETDRIFAQPLSQVPDFAFNEDVVRVFPDMIKRSVPGYPTIVENLGVLAAQFAQPNTVLYDLGSSLGAVTQALRRHVRGEGCEVIAIDNSSAMVERCREYLNAQDSMFQELLPVQVLEGDILALAFKPASVVALNFTLQFIAPEQRLALLGRIRDALVPGGALILSEKLRFDDPQEQALLTDLHIAFKRANGYSDLEIAQKRSAIENVMKPDSLEEHRQRLLAAGFSKVVPWFQCLNFTSLIALP.

S-adenosyl-L-methionine contacts are provided by residues Tyr40, 65–67 (GSS), 90–91 (DN), 122–123 (DI), Asn137, and Arg204.

This sequence belongs to the class I-like SAM-binding methyltransferase superfamily. Cx-SAM synthase family. As to quaternary structure, homodimer.

The enzyme catalyses prephenate + S-adenosyl-L-methionine = carboxy-S-adenosyl-L-methionine + 3-phenylpyruvate + H2O. Catalyzes the conversion of S-adenosyl-L-methionine (SAM) to carboxy-S-adenosyl-L-methionine (Cx-SAM). This Pseudomonas syringae pv. syringae (strain B728a) protein is Carboxy-S-adenosyl-L-methionine synthase.